Consider the following 307-residue polypeptide: Auxiliary protein GraX (307 aa).

As to quaternary structure, homodimer. Interacts with GraR and GraS.

Functionally, plays a role in resistance against cationic antimicrobial peptides (CAMPs). Facilitates the activation of GraS to transduce the signal to GraR. The sequence is that of Auxiliary protein GraX (graX) from Staphylococcus aureus (strain NCTC 8325 / PS 47).